Consider the following 155-residue polypeptide: Xanthine-guanine phosphoribosyltransferase (155 aa).

5-phospho-alpha-D-ribose 1-diphosphate-binding positions include 37–38, Arg-69, and 90–98; these read RG and EDLVDTGTT. Arg-69 contacts GMP. Asp-91 provides a ligand contact to Mg(2+). 2 residues coordinate guanine: Asp-94 and Ile-137. Positions 94 and 137 each coordinate xanthine. GMP contacts are provided by residues 94–98 and 136–137; these read DTGTT and WI.

This sequence belongs to the purine/pyrimidine phosphoribosyltransferase family. XGPT subfamily. Homotetramer. Mg(2+) is required as a cofactor.

It is found in the cell inner membrane. It carries out the reaction GMP + diphosphate = guanine + 5-phospho-alpha-D-ribose 1-diphosphate. The catalysed reaction is XMP + diphosphate = xanthine + 5-phospho-alpha-D-ribose 1-diphosphate. The enzyme catalyses IMP + diphosphate = hypoxanthine + 5-phospho-alpha-D-ribose 1-diphosphate. It functions in the pathway purine metabolism; GMP biosynthesis via salvage pathway; GMP from guanine: step 1/1. Its pathway is purine metabolism; XMP biosynthesis via salvage pathway; XMP from xanthine: step 1/1. Its function is as follows. Purine salvage pathway enzyme that catalyzes the transfer of the ribosyl-5-phosphate group from 5-phospho-alpha-D-ribose 1-diphosphate (PRPP) to the N9 position of the 6-oxopurines guanine and xanthine to form the corresponding ribonucleotides GMP (guanosine 5'-monophosphate) and XMP (xanthosine 5'-monophosphate), with the release of PPi. To a lesser extent, also acts on hypoxanthine. This Aeromonas hydrophila subsp. hydrophila (strain ATCC 7966 / DSM 30187 / BCRC 13018 / CCUG 14551 / JCM 1027 / KCTC 2358 / NCIMB 9240 / NCTC 8049) protein is Xanthine-guanine phosphoribosyltransferase.